A 67-amino-acid chain; its full sequence is Large ribosomal subunit protein bL35 (67 aa).

The protein belongs to the bacterial ribosomal protein bL35 family.

The polypeptide is Large ribosomal subunit protein bL35 (Leptothrix cholodnii (strain ATCC 51168 / LMG 8142 / SP-6) (Leptothrix discophora (strain SP-6))).